The chain runs to 1047 residues: Carbamoyl phosphate synthase arginine-specific large chain (1047 aa).

Residues 1–401 are carboxyphosphate synthetic domain; the sequence is MPKRTDIQSV…GLQKAVRSLE (401 aa). 12 residues coordinate ATP: R129, R169, G175, G176, K208, I210, E215, G241, V242, H243, Q284, and E298. The ATP-grasp 1 domain maps to 133 to 327; that stretch reads RQLMHELHEP…IARMAAKLSL (195 aa). Residues Q284, E298, and N300 each coordinate Mg(2+). Mn(2+) contacts are provided by Q284, E298, and N300. The oligomerization domain stretch occupies residues 402-549; sequence IKTHGLSLPS…YSSWTGENDL (148 aa). The interval 550–933 is carbamoyl phosphate synthetic domain; the sequence is LLPEKAKERV…AFRKAFAWGE (384 aa). In terms of domain architecture, ATP-grasp 2 spans 676 to 865; the sequence is YEFMRSVEVP…LITYTIDVLF (190 aa). ATP-binding residues include R712, A750, E756, G781, V782, H783, S784, Q824, and E836. Positions 824, 836, and 838 each coordinate Mg(2+). The Mn(2+) site is built by Q824, E836, and N838. An allosteric domain region spans residues 934–1047; sequence EQTPALFRKK…PFLLPDVVMN (114 aa). Positions 937–1047 constitute an MGS-like domain; the sequence is PALFRKKGSV…PFLLPDVVMN (111 aa).

This sequence belongs to the CarB family. In terms of assembly, composed of two chains; the small (or glutamine) chain promotes the hydrolysis of glutamine to ammonia, which is used by the large (or ammonia) chain to synthesize carbamoyl phosphate. Tetramer of heterodimers (alpha,beta)4. It depends on Mg(2+) as a cofactor. Requires Mn(2+) as cofactor.

It catalyses the reaction hydrogencarbonate + L-glutamine + 2 ATP + H2O = carbamoyl phosphate + L-glutamate + 2 ADP + phosphate + 2 H(+). The catalysed reaction is hydrogencarbonate + NH4(+) + 2 ATP = carbamoyl phosphate + 2 ADP + phosphate + 2 H(+). Its pathway is amino-acid biosynthesis; L-arginine biosynthesis; carbamoyl phosphate from bicarbonate: step 1/1. Its function is as follows. Large subunit of the glutamine-dependent carbamoyl phosphate synthetase (CPSase). CPSase catalyzes the formation of carbamoyl phosphate from the ammonia moiety of glutamine, carbonate, and phosphate donated by ATP, constituting the first step of the biosynthetic pathway leading to arginine and/or urea. The large subunit (synthetase) binds the substrates ammonia (free or transferred from glutamine from the small subunit), hydrogencarbonate and ATP and carries out an ATP-coupled ligase reaction, activating hydrogencarbonate by forming carboxy phosphate which reacts with ammonia to form carbamoyl phosphate. The chain is Carbamoyl phosphate synthase arginine-specific large chain from Halalkalibacterium halodurans (strain ATCC BAA-125 / DSM 18197 / FERM 7344 / JCM 9153 / C-125) (Bacillus halodurans).